The chain runs to 127 residues: Ribosome-binding factor A (127 aa).

This sequence belongs to the RbfA family. Monomer. Binds 30S ribosomal subunits, but not 50S ribosomal subunits or 70S ribosomes.

The protein localises to the cytoplasm. Functionally, one of several proteins that assist in the late maturation steps of the functional core of the 30S ribosomal subunit. Associates with free 30S ribosomal subunits (but not with 30S subunits that are part of 70S ribosomes or polysomes). Required for efficient processing of 16S rRNA. May interact with the 5'-terminal helix region of 16S rRNA. This Nitrosococcus oceani (strain ATCC 19707 / BCRC 17464 / JCM 30415 / NCIMB 11848 / C-107) protein is Ribosome-binding factor A.